Here is a 244-residue protein sequence, read N- to C-terminus: Probable proteasome subunit alpha type-1 (244 aa).

This sequence belongs to the peptidase T1A family. The 26S proteasome consists of a 20S proteasome core and two 19S regulatory subunits. The 20S proteasome core is composed of 28 subunits that are arranged in four stacked rings, resulting in a barrel-shaped structure. The two end rings are each formed by seven alpha subunits, and the two central rings are each formed by seven beta subunits. The catalytic chamber with the active sites is on the inside of the barrel.

It localises to the cytoplasm. It is found in the nucleus. In terms of biological role, the proteasome is a multicatalytic proteinase complex which is characterized by its ability to cleave peptides with Arg, Phe, Tyr, Leu, and Glu adjacent to the leaving group at neutral or slightly basic pH. The proteasome has an ATP-dependent proteolytic activity. In Schizosaccharomyces pombe (strain 972 / ATCC 24843) (Fission yeast), this protein is Probable proteasome subunit alpha type-1.